Reading from the N-terminus, the 123-residue chain is Putative C-type lectin protein FPV003/FPV258 (123 aa).

The region spanning 21-122 (CRGPYTSYNN…CNATYGFVCI (102 aa)) is the C-type lectin domain.

This Fowlpox virus (strain NVSL) (FPV) protein is Putative C-type lectin protein FPV003/FPV258.